Consider the following 410-residue polypeptide: Tryptophan synthase beta chain (410 aa).

Residue K98 is modified to N6-(pyridoxal phosphate)lysine.

Belongs to the TrpB family. In terms of assembly, tetramer of two alpha and two beta chains. Pyridoxal 5'-phosphate serves as cofactor.

The catalysed reaction is (1S,2R)-1-C-(indol-3-yl)glycerol 3-phosphate + L-serine = D-glyceraldehyde 3-phosphate + L-tryptophan + H2O. It participates in amino-acid biosynthesis; L-tryptophan biosynthesis; L-tryptophan from chorismate: step 5/5. Functionally, the beta subunit is responsible for the synthesis of L-tryptophan from indole and L-serine. The protein is Tryptophan synthase beta chain of Roseobacter denitrificans (strain ATCC 33942 / OCh 114) (Erythrobacter sp. (strain OCh 114)).